The chain runs to 39 residues: Cytochrome b6-f complex subunit 5 (39 aa).

Residues leucine 5 to alanine 25 form a helical membrane-spanning segment.

This sequence belongs to the PetG family. As to quaternary structure, the 4 large subunits of the cytochrome b6-f complex are cytochrome b6, subunit IV (17 kDa polypeptide, PetD), cytochrome f and the Rieske protein, while the 4 small subunits are PetG, PetL, PetM and PetN. The complex functions as a dimer.

It localises to the cellular thylakoid membrane. In terms of biological role, component of the cytochrome b6-f complex, which mediates electron transfer between photosystem II (PSII) and photosystem I (PSI), cyclic electron flow around PSI, and state transitions. PetG is required for either the stability or assembly of the cytochrome b6-f complex. The protein is Cytochrome b6-f complex subunit 5 of Prochlorococcus marinus (strain SARG / CCMP1375 / SS120).